Consider the following 360-residue polypeptide: Melanoma-associated antigen B16 (360 aa).

Positions 1–118 (MSQKNPEYAA…GNSVIPPDQP (118 aa)) are disordered. The span at 9–19 (AADHDHTREEM) shows a compositional bias: basic and acidic residues. A compositionally biased stretch (polar residues) spans 63-98 (CSSSQLLTASNQEDPAYETPSTSRGLQHPYVSSSES). The 200-residue stretch at 125-324 (IDGKVNFLVN…TVFPSQYEEA (200 aa)) folds into the MAGE domain. Positions 340–360 (AGPSSASGESSSDMGSNVPHI) are disordered. Over residues 341–360 (GPSSASGESSSDMGSNVPHI) the composition is skewed to low complexity.

The polypeptide is Melanoma-associated antigen B16 (Mageb16) (Rattus norvegicus (Rat)).